Reading from the N-terminus, the 542-residue chain is Thermosome subunit alpha (542 aa).

This sequence belongs to the TCP-1 chaperonin family. In terms of assembly, forms a Heterooligomeric complex of two stacked eight-membered rings.

Its function is as follows. Molecular chaperone; binds unfolded polypeptides in vitro, and has a weak ATPase activity. This Methanothermobacter thermautotrophicus (strain ATCC 29096 / DSM 1053 / JCM 10044 / NBRC 100330 / Delta H) (Methanobacterium thermoautotrophicum) protein is Thermosome subunit alpha (thsA).